The primary structure comprises 395 residues: Terminal nucleotidyltransferase 5B (395 aa).

It belongs to the TENT family.

It is found in the cytoplasm. It localises to the nucleus. The catalysed reaction is RNA(n) + ATP = RNA(n)-3'-adenine ribonucleotide + diphosphate. Its function is as follows. Catalyzes the transfer of one adenosine molecule from an ATP to an mRNA poly(A) tail bearing a 3'-OH terminal group in an ATP hydrolysis-dependent manner and participates in cytoplasmic polyadenylation. May be involved in maintaining the translation efficiency of at least some genes through preventing degradation of their mRNAs. The protein is Terminal nucleotidyltransferase 5B of Xenopus tropicalis (Western clawed frog).